The chain runs to 575 residues: Phosphoenolpyruvate-protein phosphotransferase (575 aa).

The active-site Tele-phosphohistidine intermediate is His191. Residues Arg298 and Arg334 each contribute to the phosphoenolpyruvate site. Residues Glu435 and Asp459 each coordinate Mg(2+). Residues 458–459 and Arg469 contribute to the phosphoenolpyruvate site; that span reads ND. The Proton donor role is filled by Cys506.

It belongs to the PEP-utilizing enzyme family. Homodimer. It depends on Mg(2+) as a cofactor.

Its subcellular location is the cytoplasm. It carries out the reaction L-histidyl-[protein] + phosphoenolpyruvate = N(pros)-phospho-L-histidyl-[protein] + pyruvate. Functionally, general (non sugar-specific) component of the phosphoenolpyruvate-dependent sugar phosphotransferase system (sugar PTS). This major carbohydrate active-transport system catalyzes the phosphorylation of incoming sugar substrates concomitantly with their translocation across the cell membrane. Enzyme I transfers the phosphoryl group from phosphoenolpyruvate (PEP) to the phosphoryl carrier protein (HPr). This Lactococcus lactis subsp. cremoris (Streptococcus cremoris) protein is Phosphoenolpyruvate-protein phosphotransferase (ptsI).